The chain runs to 220 residues: Type II restriction enzyme NspV (220 aa).

It catalyses the reaction Endonucleolytic cleavage of DNA to give specific double-stranded fragments with terminal 5'-phosphates.. A P subtype restriction enzyme that recognizes the double-stranded sequence 5'-TTCGAA-3' and cleaves after T-2. The polypeptide is Type II restriction enzyme NspV (Nostoc sp. (strain ATCC 29411 / PCC 7524)).